The sequence spans 37 residues: GCLGEGEKCADWSGPSCCDGFYCSCRSMPYCRCRNNS.

4 disulfides stabilise this stretch: C2–C18, C9–C23, C17–C33, and C25–C31. At S37 the chain carries Serine amide.

Belongs to the neurotoxin 07 (Beta/delta-agtx) family. 02 (aga-3) subfamily. In terms of tissue distribution, expressed by the venom gland.

It is found in the secreted. Functionally, binds at site 4 of sodium channels (Nav) and inhibits the fast inactivation of cockroach channels. This toxin is active only on insects. Has a potent activity against S.litura larvae. This Pireneitega luctuosa (Tangled nest spider) protein is Delta-amaurobitoxin-Pl1a.